The primary structure comprises 501 residues: Glycerol kinase (501 aa).

ADP is bound at residue Thr-11. Thr-11, Thr-12, and Ser-13 together coordinate ATP. Thr-11 contacts sn-glycerol 3-phosphate. Arg-15 contacts ADP. Positions 81, 82, 133, and 242 each coordinate sn-glycerol 3-phosphate. Residues Arg-81, Glu-82, Tyr-133, Asp-242, and Gln-243 each coordinate glycerol. ADP contacts are provided by Thr-264 and Gly-307. ATP is bound by residues Thr-264, Gly-307, Gln-311, and Gly-409. Positions 409 and 413 each coordinate ADP.

The protein belongs to the FGGY kinase family.

It catalyses the reaction glycerol + ATP = sn-glycerol 3-phosphate + ADP + H(+). Its pathway is polyol metabolism; glycerol degradation via glycerol kinase pathway; sn-glycerol 3-phosphate from glycerol: step 1/1. Its activity is regulated as follows. Inhibited by fructose 1,6-bisphosphate (FBP). Its function is as follows. Key enzyme in the regulation of glycerol uptake and metabolism. Catalyzes the phosphorylation of glycerol to yield sn-glycerol 3-phosphate. The polypeptide is Glycerol kinase (Borreliella burgdorferi (strain ATCC 35210 / DSM 4680 / CIP 102532 / B31) (Borrelia burgdorferi)).